Reading from the N-terminus, the 127-residue chain is Calcitonin receptor-stimulating peptide 1 (127 aa).

Positions methionine 1 to alanine 25 are cleaved as a signal peptide. The propeptide occupies alanine 26 to glutamine 79. A disulfide bridge connects residues cysteine 83 and cysteine 88.

This sequence belongs to the calcitonin family.

It localises to the secreted. Its function is as follows. Stimulates cAMP production in porcine kidney cell line LLC-PK1 via the calcitonin receptor (CT) but not via the CT-like (CL) receptor. The protein is Calcitonin receptor-stimulating peptide 1 (CRSP1) of Canis lupus familiaris (Dog).